Here is a 491-residue protein sequence, read N- to C-terminus: Glutamate--tRNA ligase (491 aa).

The 'HIGH' region motif lies at 13 to 23 (PSPTGFLHIGN). Cysteine 110, cysteine 112, cysteine 137, and histidine 139 together coordinate Zn(2+). The short motif at 254–258 (KLSKR) is the 'KMSKS' region element. Lysine 257 serves as a coordination point for ATP.

It belongs to the class-I aminoacyl-tRNA synthetase family. Glutamate--tRNA ligase type 1 subfamily. As to quaternary structure, monomer. It depends on Zn(2+) as a cofactor.

The protein localises to the cytoplasm. It catalyses the reaction tRNA(Glu) + L-glutamate + ATP = L-glutamyl-tRNA(Glu) + AMP + diphosphate. Its function is as follows. Catalyzes the attachment of glutamate to tRNA(Glu) in a two-step reaction: glutamate is first activated by ATP to form Glu-AMP and then transferred to the acceptor end of tRNA(Glu). This Listeria monocytogenes serotype 4b (strain F2365) protein is Glutamate--tRNA ligase.